The following is a 616-amino-acid chain: Dihydroxy-acid dehydratase (616 aa).

Mg(2+) is bound at residue Asp-81. Cys-122 is a [2Fe-2S] cluster binding site. Residues Asp-123 and Lys-124 each coordinate Mg(2+). Lys-124 carries the post-translational modification N6-carboxylysine. Cys-195 contacts [2Fe-2S] cluster. Residue Glu-491 participates in Mg(2+) binding. Ser-517 serves as the catalytic Proton acceptor.

This sequence belongs to the IlvD/Edd family. As to quaternary structure, homodimer. [2Fe-2S] cluster serves as cofactor. Requires Mg(2+) as cofactor.

The enzyme catalyses (2R)-2,3-dihydroxy-3-methylbutanoate = 3-methyl-2-oxobutanoate + H2O. It carries out the reaction (2R,3R)-2,3-dihydroxy-3-methylpentanoate = (S)-3-methyl-2-oxopentanoate + H2O. It participates in amino-acid biosynthesis; L-isoleucine biosynthesis; L-isoleucine from 2-oxobutanoate: step 3/4. The protein operates within amino-acid biosynthesis; L-valine biosynthesis; L-valine from pyruvate: step 3/4. Functions in the biosynthesis of branched-chain amino acids. Catalyzes the dehydration of (2R,3R)-2,3-dihydroxy-3-methylpentanoate (2,3-dihydroxy-3-methylvalerate) into 2-oxo-3-methylpentanoate (2-oxo-3-methylvalerate) and of (2R)-2,3-dihydroxy-3-methylbutanoate (2,3-dihydroxyisovalerate) into 2-oxo-3-methylbutanoate (2-oxoisovalerate), the penultimate precursor to L-isoleucine and L-valine, respectively. In Klebsiella pneumoniae (strain 342), this protein is Dihydroxy-acid dehydratase.